A 910-amino-acid chain; its full sequence is Coatomer subunit beta'-2 (910 aa).

WD repeat units lie at residues 13–52 (QRSERVKSVDLHPTEPWILSSLYSGSVCIWNYQTQTMVKS), 55–94 (VTELPVRSSKFIARKQWIVAGADDMFIRVYNYNTMDKVKV), 97–136 (AHTDYIRCVAVHPTQPFVLSSSDDMLIKLWDWDKGWMCTQ), 140–180 (GHSH…PNFT), 183–224 (GHSK…CVQT), 227–266 (GHAHNVSAVCFHPELPITLTGSEDGTVRLWHSTTYRLENT), 269–309 (YGLE…ASMD), 351–393 (TCDL…GSAL), and 461–501 (RIDV…SHLD). Positions 882–910 (ADGSTDGAVLVNGNDTEEQWGTNNEESSA) are disordered. Over residues 900 to 910 (QWGTNNEESSA) the composition is skewed to polar residues.

Belongs to the WD repeat COPB2 family. As to quaternary structure, oligomeric complex that consists of at least the alpha, beta, beta', gamma, delta, epsilon and zeta subunits.

The protein resides in the cytoplasm. The protein localises to the golgi apparatus membrane. Its subcellular location is the cytoplasmic vesicle. It localises to the COPI-coated vesicle membrane. In terms of biological role, the coatomer is a cytosolic protein complex that binds to dilysine motifs and reversibly associates with Golgi non-clathrin-coated vesicles, which further mediate biosynthetic protein transport from the ER, via the Golgi up to the trans Golgi network. Coatomer complex is required for budding from Golgi membranes, and is essential for the retrograde Golgi-to-ER transport of dilysine-tagged proteins. The polypeptide is Coatomer subunit beta'-2 (Oryza sativa subsp. japonica (Rice)).